Consider the following 119-residue polypeptide: Large ribosomal subunit protein bL20 (119 aa).

It belongs to the bacterial ribosomal protein bL20 family.

Its function is as follows. Binds directly to 23S ribosomal RNA and is necessary for the in vitro assembly process of the 50S ribosomal subunit. It is not involved in the protein synthesizing functions of that subunit. In Bacillus velezensis (strain DSM 23117 / BGSC 10A6 / LMG 26770 / FZB42) (Bacillus amyloliquefaciens subsp. plantarum), this protein is Large ribosomal subunit protein bL20.